Reading from the N-terminus, the 515-residue chain is Membrane-bound lytic murein transglycosylase F (515 aa).

An N-terminal signal peptide occupies residues methionine 1–alanine 32. The non-LT domain stretch occupies residues aspartate 33–glycine 269. Residues aspartate 270 to asparagine 515 are LT domain. Glutamate 314 is an active-site residue. Positions glutamine 493–asparagine 515 are disordered.

The protein in the N-terminal section; belongs to the bacterial solute-binding protein 3 family. In the C-terminal section; belongs to the transglycosylase Slt family.

The protein localises to the cell outer membrane. The catalysed reaction is Exolytic cleavage of the (1-&gt;4)-beta-glycosidic linkage between N-acetylmuramic acid (MurNAc) and N-acetylglucosamine (GlcNAc) residues in peptidoglycan, from either the reducing or the non-reducing ends of the peptidoglycan chains, with concomitant formation of a 1,6-anhydrobond in the MurNAc residue.. Murein-degrading enzyme that degrades murein glycan strands and insoluble, high-molecular weight murein sacculi, with the concomitant formation of a 1,6-anhydromuramoyl product. Lytic transglycosylases (LTs) play an integral role in the metabolism of the peptidoglycan (PG) sacculus. Their lytic action creates space within the PG sacculus to allow for its expansion as well as for the insertion of various structures such as secretion systems and flagella. This Citrobacter koseri (strain ATCC BAA-895 / CDC 4225-83 / SGSC4696) protein is Membrane-bound lytic murein transglycosylase F.